A 304-amino-acid polypeptide reads, in one-letter code: Splicing factor U2af small subunit B (304 aa).

The C3H1-type 1 zinc-finger motif lies at 12 to 40 (EKDRVNCPFYFKIGACRHGDRCSRLHNRP). In terms of domain architecture, RRM spans 44–146 (PTIVLANMYQ…RPIIVEYSPV (103 aa)). A C3H1-type 2 zinc finger spans residues 148–175 (DFREATCRQFEENSCNRGGYCNFMHVKQ). A compositionally biased stretch (basic residues) spans 184 to 207 (LYGGRSRRSHGRSRSPSPRHRRGN). A disordered region spans residues 184–304 (LYGGRSRRSH…QWNREREEKP (121 aa)). Residues 208–220 (RDRDDFRRERDGY) show a composition bias toward basic and acidic residues. Positions 221–258 (RGGGDGYRGGGGGGGGDGYRGGDSYRGGGGGGRRGGGS) are enriched in gly residues. Positions 268-280 (RRRHGSPPRRARS) are enriched in basic residues. Positions 281–304 (PVRESSEERRAKIEQWNREREEKP) are enriched in basic and acidic residues.

The protein belongs to the splicing factor SR family.

Its subcellular location is the nucleus. In terms of biological role, necessary for the splicing of pre-mRNA. In Oryza sativa subsp. japonica (Rice), this protein is Splicing factor U2af small subunit B (U2AF35B).